Consider the following 475-residue polypeptide: MGTATEKLSDATFKVADLSLAEWGRKEISVSEFEMPGLMAIRRKYAKEKPLAGVRITGSLHMTIQTAVLIETLVDLGASVRWASCNIFSTQDHAAAAIAKAGVPVFAWKGESLEEYWWCTLQAVTHPGGKGPQLVVDDGGDVTLLIHKGYELENGSDWVNTPSGSHEEKVIKDLLKQVHAEDPQRWHKMVAEWRGVSEETTTGVHRLYKMQEQGKLLVPAINVNDSVTKSKFDNLYGCRESLADGIKRATDVMVAGKVAVICGYGDVGKGSAHSLRGMGARVIVTEIDPINALQAAMEGFEVTTIEDTLGRGDIYVTCTGNCEIITLEHMRLMKDQAIVCNIGHFDNEIQMDRLNESDAKRLQIKPQVDMYTFPGGSSIFILAEGRLVNLGCATGHPSFVMSNSFANQTLAQLDLWKNKDTYKVGVYTLPKKLDEEVARLHLEKIGVKLTTLTPAQAEYLGVPVEGPYKPDHYRY.

Residues threonine 63, aspartate 138, and glutamate 199 each contribute to the substrate site. An NAD(+)-binding site is contributed by 200–202 (TTT). Lysine 229 and aspartate 233 together coordinate substrate. Residues asparagine 234, 263–268 (GYGDVG), glutamate 286, asparagine 321, 342–344 (IGH), and asparagine 389 contribute to the NAD(+) site.

Belongs to the adenosylhomocysteinase family. The cofactor is NAD(+).

It localises to the cytoplasm. The enzyme catalyses S-adenosyl-L-homocysteine + H2O = L-homocysteine + adenosine. The protein operates within amino-acid biosynthesis; L-homocysteine biosynthesis; L-homocysteine from S-adenosyl-L-homocysteine: step 1/1. May play a key role in the regulation of the intracellular concentration of adenosylhomocysteine. The polypeptide is Adenosylhomocysteinase (Solibacter usitatus (strain Ellin6076)).